Consider the following 365-residue polypeptide: Peptide chain release factor 2 (365 aa).

Gln251 carries the N5-methylglutamine modification.

It belongs to the prokaryotic/mitochondrial release factor family. In terms of processing, methylated by PrmC. Methylation increases the termination efficiency of RF2.

It is found in the cytoplasm. Peptide chain release factor 2 directs the termination of translation in response to the peptide chain termination codons UGA and UAA. The protein is Peptide chain release factor 2 of Campylobacter jejuni subsp. jejuni serotype O:2 (strain ATCC 700819 / NCTC 11168).